The sequence spans 185 residues: Peptidyl-tRNA hydrolase (185 aa).

Position 14 (Tyr14) interacts with tRNA. His19 acts as the Proton acceptor in catalysis. Residues Tyr65, Asn67, and Asn113 each coordinate tRNA.

Belongs to the PTH family. As to quaternary structure, monomer.

The protein resides in the cytoplasm. The catalysed reaction is an N-acyl-L-alpha-aminoacyl-tRNA + H2O = an N-acyl-L-amino acid + a tRNA + H(+). Functionally, hydrolyzes ribosome-free peptidyl-tRNAs (with 1 or more amino acids incorporated), which drop off the ribosome during protein synthesis, or as a result of ribosome stalling. Catalyzes the release of premature peptidyl moieties from peptidyl-tRNA molecules trapped in stalled 50S ribosomal subunits, and thus maintains levels of free tRNAs and 50S ribosomes. This is Peptidyl-tRNA hydrolase from Rickettsia akari (strain Hartford).